Here is a 131-residue protein sequence, read N- to C-terminus: Small ribosomal subunit protein uS8 (131 aa).

Belongs to the universal ribosomal protein uS8 family. As to quaternary structure, part of the 30S ribosomal subunit. Contacts proteins S5 and S12.

One of the primary rRNA binding proteins, it binds directly to 16S rRNA central domain where it helps coordinate assembly of the platform of the 30S subunit. This Wolbachia sp. subsp. Brugia malayi (strain TRS) protein is Small ribosomal subunit protein uS8.